A 165-amino-acid chain; its full sequence is Ubiquitin D (165 aa).

Ubiquitin-like domains are found at residues serine 6–valine 81 and leucine 90–isoleucine 163.

The protein belongs to the ubiquitin D family. As to quaternary structure, interacts directly with the 26S proteasome. Interacts with NUB1; this interaction facilitates the linking of UBD-conjugated target protein to the proteasome complex and accelerates its own degradation and that of its conjugates. Interacts (via ubiquitin-like 1 domain) with the spindle checkpoint protein MAD2L1 during mitosis. Present in aggresomes of proteasome inhibited cells. Interacts with HDAC6 under proteasome impairment conditions. Forms a thioester with UBA6 in cells stimulated with tumor necrosis factor-alpha (TNFa) and interferon-gamma (IFNg). Interacts with SQSTM1 and TP53/p53. Post-translationally, can be acetylated. Constitutively expressed in mature dendritic cells and B-cells. Mostly expressed in the reticuloendothelial system (e.g. thymus, spleen), the gastrointestinal system, kidney, lung and prostate gland.

The protein resides in the nucleus. It localises to the cytoplasm. Its function is as follows. Ubiquitin-like protein modifier which can be covalently attached to target proteins and subsequently leads to their degradation by the 26S proteasome, in a NUB1-dependent manner. Conjugation to the target protein is activated by UBA6 via adenylation of its C-terminal glycine. Promotes the expression of the proteasome subunit beta type-9 (PSMB9/LMP2). Regulates TNF-alpha-induced and LPS-mediated activation of the central mediator of innate immunity NF-kappa-B by promoting TNF-alpha-mediated proteasomal degradation of ubiquitinated-I-kappa-B-alpha. Required for TNF-alpha-induced p65 nuclear translocation in renal tubular epithelial cells (RTECs). May be involved in dendritic cell (DC) maturation, the process by which immature dendritic cells differentiate into fully competent antigen-presenting cells that initiate T-cell responses. Mediates mitotic non-disjunction and chromosome instability, in long-term in vitro culture and cancers, by abbreviating mitotic phase and impairing the kinetochore localization of MAD2L1 during the prometaphase stage of the cell cycle. May be involved in the formation of aggresomes when proteasome is saturated or impaired. Mediates apoptosis in a caspase-dependent manner, especially in renal epithelium and tubular cells during renal diseases such as polycystic kidney disease and Human immunodeficiency virus (HIV)-associated nephropathy (HIVAN). In Homo sapiens (Human), this protein is Ubiquitin D (UBD).